Reading from the N-terminus, the 564-residue chain is Ribulokinase (564 aa).

It belongs to the ribulokinase family.

The enzyme catalyses D-ribulose + ATP = D-ribulose 5-phosphate + ADP + H(+). It carries out the reaction L-ribulose + ATP = L-ribulose 5-phosphate + ADP + H(+). It functions in the pathway carbohydrate degradation; L-arabinose degradation via L-ribulose; D-xylulose 5-phosphate from L-arabinose (bacterial route): step 2/3. This chain is Ribulokinase, found in Anoxybacillus flavithermus (strain DSM 21510 / WK1).